A 428-amino-acid chain; its full sequence is Histidine--tRNA ligase (428 aa).

It belongs to the class-II aminoacyl-tRNA synthetase family. As to quaternary structure, homodimer.

Its subcellular location is the cytoplasm. The catalysed reaction is tRNA(His) + L-histidine + ATP = L-histidyl-tRNA(His) + AMP + diphosphate + H(+). The sequence is that of Histidine--tRNA ligase from Pseudomonas entomophila (strain L48).